Reading from the N-terminus, the 364-residue chain is 2-oxoglutarate-dependent dioxygenase imqE (364 aa).

Residues Lys-73 to Gly-92 are disordered. One can recognise a Fe2OG dioxygenase domain in the interval Asp-199–Ala-315. Residues His-227, Asp-229, and His-287 each contribute to the Fe cation site. Arg-306 contacts 2-oxoglutarate.

The protein belongs to the iron/ascorbate-dependent oxidoreductase family. It depends on Fe(2+) as a cofactor.

It participates in secondary metabolite biosynthesis. In terms of biological role, 2-oxoglutarate-dependent dioxygenase; part of the gene cluster that mediates the biosynthesis of imizoquins A to D, tripeptide-derived alkaloids that serve a protective role against oxidative stress that are essential for normal germination. ImqB is a canonical three-module NRPS that assembles the tripeptide backbone of the imizoquins via condensation of Trp, Tyr, and Leu-derived precursors. N-methylation by imqF and phenol oxidation by imqC, followed by cyclization via the FAD-dependent oxidase imqH carry out the three-step transformation of L-tyrosine into tetrahydroisoquinoline. Importantly, this sequence requires the presence of a free amine in the tyrosine moiety, indicating that isoquinoline formation occurs prior to peptide bond formation. The imidazolidin-4-one ring of imizoquins could form following additional oxidation of the methyl-derived bridgehead carbon by imqH. Lastly, O-methylation by imqG and leucine hydroxylation by imqE complete biosynthesis of the imizoquins. The protein is 2-oxoglutarate-dependent dioxygenase imqE of Aspergillus flavus (strain ATCC 200026 / FGSC A1120 / IAM 13836 / NRRL 3357 / JCM 12722 / SRRC 167).